Here is a 243-residue protein sequence, read N- to C-terminus: Probable transcriptional regulatory protein LCABL_11860 (243 aa).

Residues 1–23 form a disordered region; sequence MSGHSKWHNIQGRKNAQDSKRGK.

It belongs to the TACO1 family.

Its subcellular location is the cytoplasm. In Lacticaseibacillus casei (strain BL23) (Lactobacillus casei), this protein is Probable transcriptional regulatory protein LCABL_11860.